Reading from the N-terminus, the 88-residue chain is Large ribosomal subunit protein uL29 (88 aa).

The protein belongs to the universal ribosomal protein uL29 family.

The chain is Large ribosomal subunit protein uL29 (rpl29) from Sulfurisphaera tokodaii (strain DSM 16993 / JCM 10545 / NBRC 100140 / 7) (Sulfolobus tokodaii).